The following is an 886-amino-acid chain: Alanine--tRNA ligase (886 aa).

Residues H564, H568, C676, and H680 each contribute to the Zn(2+) site.

Belongs to the class-II aminoacyl-tRNA synthetase family. Zn(2+) serves as cofactor.

The protein localises to the cytoplasm. It catalyses the reaction tRNA(Ala) + L-alanine + ATP = L-alanyl-tRNA(Ala) + AMP + diphosphate. Functionally, catalyzes the attachment of alanine to tRNA(Ala) in a two-step reaction: alanine is first activated by ATP to form Ala-AMP and then transferred to the acceptor end of tRNA(Ala). Also edits incorrectly charged Ser-tRNA(Ala) and Gly-tRNA(Ala) via its editing domain. This chain is Alanine--tRNA ligase, found in Methylobacterium sp. (strain 4-46).